A 444-amino-acid polypeptide reads, in one-letter code: L-seryl-tRNA(Sec) selenium transferase (444 aa).

An N6-(pyridoxal phosphate)lysine modification is found at Lys-284.

It belongs to the SelA family. It depends on pyridoxal 5'-phosphate as a cofactor.

The protein resides in the cytoplasm. It catalyses the reaction L-seryl-tRNA(Sec) + selenophosphate + H(+) = L-selenocysteinyl-tRNA(Sec) + phosphate. It participates in aminoacyl-tRNA biosynthesis; selenocysteinyl-tRNA(Sec) biosynthesis; selenocysteinyl-tRNA(Sec) from L-seryl-tRNA(Sec) (bacterial route): step 1/1. Functionally, converts seryl-tRNA(Sec) to selenocysteinyl-tRNA(Sec) required for selenoprotein biosynthesis. The sequence is that of L-seryl-tRNA(Sec) selenium transferase from Wolinella succinogenes (strain ATCC 29543 / DSM 1740 / CCUG 13145 / JCM 31913 / LMG 7466 / NCTC 11488 / FDC 602W) (Vibrio succinogenes).